We begin with the raw amino-acid sequence, 132 residues long: Small ribosomal subunit protein uS8c (132 aa).

This sequence belongs to the universal ribosomal protein uS8 family. Part of the 30S ribosomal subunit.

It localises to the plastid. The protein localises to the chloroplast. Its function is as follows. One of the primary rRNA binding proteins, it binds directly to 16S rRNA central domain where it helps coordinate assembly of the platform of the 30S subunit. This chain is Small ribosomal subunit protein uS8c (rps8), found in Phaeodactylum tricornutum (strain CCAP 1055/1).